A 331-amino-acid polypeptide reads, in one-letter code: Centriolar satellite-associated tubulin polyglutamylase complex regulator 1 (331 aa).

The required for interaction with PCM1 stretch occupies residues 1–111 (MLSPERLALP…HCLLQLLCPD (111 aa)). The tract at residues 1-225 (MLSPERLALP…SCPPPALVKE (225 aa)) is required for interaction with TPGS1, LRRC49, and TTLL1. The interval 112–331 (FPLELTQKAA…STEETDESET (220 aa)) is required for interaction with TPGS2. Residues 292-331 (SCLPSRTPPRVGSPWKPLHRSRKLDAESDGSTEETDESET) form a disordered region. Residues 318-331 (ESDGSTEETDESET) show a composition bias toward acidic residues. Position 319 is a phosphoserine (Ser-319).

This sequence belongs to the CSTPP1 family. In terms of assembly, interacts with PCM1. Interacts with TTLL1, TPGS1, TPGS2 and LRRC49; the interactions link CSTPP1 to the complex TPGC. Binds to alpha-tubulin.

The protein localises to the cytoplasm. It localises to the cytoskeleton. It is found in the microtubule organizing center. The protein resides in the centrosome. Its subcellular location is the centriolar satellite. Regulator of the tubulin polyglutamylase complex (TPGC) that controls cytoskeletal organization, nuclear shape, and cilium disassembly by balancing microtubule and actin assembly. Regulates the assembly and stability of the TPGC and thereby modulates polyglutamylation of the microtubule, which antagonizes MAP4 binding. The sequence is that of Centriolar satellite-associated tubulin polyglutamylase complex regulator 1 from Mus musculus (Mouse).